The following is a 633-amino-acid chain: Basic helix-loop-helix ARNT-like protein 1 (633 aa).

A disordered region spans residues 1 to 65 (MADQRMDISS…GMDTDKDDQH (65 aa)). The residue at position 17 (Ser17) is a Phosphoserine; by GSK3-beta. A compositionally biased stretch (polar residues) spans 24 to 33 (ISSSLSTSGM). Residues 36–41 (NRKRKG) carry the Nuclear localization signal motif. The region spanning 79-132 (NAREAHSQIEKRRRDKMNSFIDELASLVPTCNAMSRKLDKLTVLRMAVQHMKTL) is the bHLH domain. A Phosphoserine modification is found at Ser85. Ser97 is modified (phosphoserine; by CK2). The Nuclear export signal 1 motif lies at 149-159 (LSDDELKHLIL). The PAS 1 domain occupies 150 to 222 (SDDELKHLIL…EQLSSSDTAP (73 aa)). A Glycyl lysine isopeptide (Lys-Gly) (interchain with G-Cter in SUMO2 and SUMO3) cross-link involves residue Lys259. A Glycyl lysine isopeptide (Lys-Gly) (interchain with G-Cter in SUMO) cross-link involves residue Lys266. The 71-residue stretch at 333–403 (PQPVNGEIRV…ECHRQVLQTR (71 aa)) folds into the PAS 2 domain. The short motif at 368 to 376 (LAYLPQELL) is the Nuclear export signal 2 element. One can recognise a PAC domain in the interval 408 to 451 (TNCYKFKIKDGSFITLRSRWFSFMNPWTKEVEYIVSTNTVVSTN). Disordered regions lie at residues 472–499 (SVLQ…RAGA) and 518–555 (GSSP…TPDI). Residues 518 to 528 (GSSPSSCGSSP) are compositionally biased toward low complexity. Lys545 bears the N6-acetyllysine mark.

In terms of assembly, component of the circadian clock oscillator which includes the CRY1/2 proteins, CLOCK or NPAS2, BMAL1 or BMAL2, CSNK1D and/or CSNK1E, TIMELESS and the PER1/2/3 proteins. Forms a heterodimer with CLOCK. The CLOCK-BMAL1 heterodimer is required for E-box-dependent transactivation, for CLOCK nuclear translocation and degradation, and, for phosphorylation of both CLOCK and BMAL1. Interacts with PER1, PER2, CRY1 and CRY2 and this interaction requires a translocation to the nucleus. Interaction of the CLOCK-BMAL1 heterodimer with PER or CRY inhibits transcription activation. In terms of processing, ubiquitinated, leading to its proteasomal degradation. Deubiquitinated by USP9X. O-glycosylated; contains O-GlcNAc. O-glycosylation by OGT prevents protein degradation by inhibiting ubiquitination. It also stabilizes the CLOCK-BMAL1 heterodimer thereby increasing CLOCK-BMAL1-mediated transcription of genes in the negative loop of the circadian clock such as PER1/2/3 and CRY1/2. Post-translationally, acetylated on Lys-545 by CLOCK during the repression phase of the circadian cycle. Acetylation facilitates recruitment of CRY1 protein and initiates the repression phase of the circadian cycle. Acetylated at Lys-545 by KAT5 during the activation phase of the cycle, leading to recruitment of the positive transcription elongation factor b (P-TEFb) and BRD4, followed by productive elongation of circadian transcripts. Deacetylated by SIRT1, which may result in decreased protein stability. In terms of processing, phosphorylated upon dimerization with CLOCK. Phosphorylation enhances the transcriptional activity, alters the subcellular localization and decreases the stability of the CLOCK-BMAL1 heterodimer by promoting its degradation. Phosphorylation shows circadian variations in the liver with a peak between CT10 to CT14. Phosphorylation at Ser-97 by CK2 is essential for its nuclear localization, its interaction with CLOCK and controls CLOCK nuclear entry. Dephosphorylation at Ser-85 is important for dimerization with CLOCK and transcriptional activity. Sumoylated on Lys-266 upon dimerization with CLOCK. Predominantly conjugated to poly-SUMO2/3 rather than SUMO1 and the level of these conjugates undergo rhythmic variation, peaking at CT9-CT12. Sumoylation localizes it exclusively to the PML body and promotes its ubiquitination in the PML body, ubiquitin-dependent proteasomal degradation and the transcriptional activity of the CLOCK-BMAL1 heterodimer. Post-translationally, undergoes lysosome-mediated degradation in a time-dependent manner in the liver.

It localises to the nucleus. It is found in the cytoplasm. Its subcellular location is the PML body. Its function is as follows. Transcriptional activator which forms a core component of the circadian clock. The circadian clock, an internal time-keeping system, regulates various physiological processes through the generation of approximately 24 hour circadian rhythms in gene expression, which are translated into rhythms in metabolism and behavior. It is derived from the Latin roots 'circa' (about) and 'diem' (day) and acts as an important regulator of a wide array of physiological functions including metabolism, sleep, body temperature, blood pressure, endocrine, immune, cardiovascular, and renal function. Consists of two major components: the central clock, residing in the suprachiasmatic nucleus (SCN) of the brain, and the peripheral clocks that are present in nearly every tissue and organ system. Both the central and peripheral clocks can be reset by environmental cues, also known as Zeitgebers (German for 'timegivers'). The predominant Zeitgeber for the central clock is light, which is sensed by retina and signals directly to the SCN. The central clock entrains the peripheral clocks through neuronal and hormonal signals, body temperature and feeding-related cues, aligning all clocks with the external light/dark cycle. Circadian rhythms allow an organism to achieve temporal homeostasis with its environment at the molecular level by regulating gene expression to create a peak of protein expression once every 24 hours to control when a particular physiological process is most active with respect to the solar day. Transcription and translation of core clock components (CLOCK, NPAS2, BMAL1, BMAL2, PER1, PER2, PER3, CRY1 and CRY2) plays a critical role in rhythm generation, whereas delays imposed by post-translational modifications (PTMs) are important for determining the period (tau) of the rhythms (tau refers to the period of a rhythm and is the length, in time, of one complete cycle). A diurnal rhythm is synchronized with the day/night cycle, while the ultradian and infradian rhythms have a period shorter and longer than 24 hours, respectively. Disruptions in the circadian rhythms contribute to the pathology of cardiovascular diseases, cancer, metabolic syndromes and aging. A transcription/translation feedback loop (TTFL) forms the core of the molecular circadian clock mechanism. Transcription factors, CLOCK or NPAS2 and BMAL1 or BMAL2, form the positive limb of the feedback loop, act in the form of a heterodimer and activate the transcription of core clock genes and clock-controlled genes (involved in key metabolic processes), harboring E-box elements (5'-CACGTG-3') within their promoters. The core clock genes: PER1/2/3 and CRY1/2 which are transcriptional repressors form the negative limb of the feedback loop and interact with the CLOCK|NPAS2-BMAL1|BMAL2 heterodimer inhibiting its activity and thereby negatively regulating their own expression. This heterodimer also activates nuclear receptors NR1D1/2 and RORA/B/G, which form a second feedback loop and which activate and repress BMAL1 transcription, respectively. The preferred binding motif for the CLOCK-BMAL1 heterodimer is 5'-CACGTGA-3', which contains a flanking adenine nucleotide at the 3-prime end of the canonical 6-nucleotide E-box sequence. CLOCK specifically binds to the half-site 5'-CAC-3', while BMAL1 binds to the half-site 5'-GTGA-3'. Essential for the rhythmic interaction of CLOCK with ASS1 and plays a critical role in positively regulating CLOCK-mediated acetylation of ASS1. Plays a role in protecting against lethal sepsis by limiting the expression of immune checkpoint protein CD274 in macrophages in a PKM2-dependent manner. The sequence is that of Basic helix-loop-helix ARNT-like protein 1 (BMAL1) from Tyto alba (Barn owl).